The primary structure comprises 437 residues: Serine hydroxymethyltransferase 1 (437 aa).

(6S)-5,6,7,8-tetrahydrofolate-binding positions include L132 and 136-138 (GHL). At K241 the chain carries N6-(pyridoxal phosphate)lysine.

Belongs to the SHMT family. Homodimer. Pyridoxal 5'-phosphate serves as cofactor.

The protein resides in the cytoplasm. It carries out the reaction (6R)-5,10-methylene-5,6,7,8-tetrahydrofolate + glycine + H2O = (6S)-5,6,7,8-tetrahydrofolate + L-serine. It participates in one-carbon metabolism; tetrahydrofolate interconversion. Its pathway is amino-acid biosynthesis; glycine biosynthesis; glycine from L-serine: step 1/1. Functionally, catalyzes the reversible interconversion of serine and glycine with tetrahydrofolate (THF) serving as the one-carbon carrier. This reaction serves as the major source of one-carbon groups required for the biosynthesis of purines, thymidylate, methionine, and other important biomolecules. Also exhibits THF-independent aldolase activity toward beta-hydroxyamino acids, producing glycine and aldehydes, via a retro-aldol mechanism. The polypeptide is Serine hydroxymethyltransferase 1 (Mesorhizobium japonicum (strain LMG 29417 / CECT 9101 / MAFF 303099) (Mesorhizobium loti (strain MAFF 303099))).